The primary structure comprises 336 residues: Tetraacyldisaccharide 4'-kinase (336 aa).

60 to 67 (TVGGTGKT) is an ATP binding site.

This sequence belongs to the LpxK family.

The enzyme catalyses a lipid A disaccharide + ATP = a lipid IVA + ADP + H(+). It functions in the pathway glycolipid biosynthesis; lipid IV(A) biosynthesis; lipid IV(A) from (3R)-3-hydroxytetradecanoyl-[acyl-carrier-protein] and UDP-N-acetyl-alpha-D-glucosamine: step 6/6. Its function is as follows. Transfers the gamma-phosphate of ATP to the 4'-position of a tetraacyldisaccharide 1-phosphate intermediate (termed DS-1-P) to form tetraacyldisaccharide 1,4'-bis-phosphate (lipid IVA). The chain is Tetraacyldisaccharide 4'-kinase from Pseudomonas entomophila (strain L48).